The chain runs to 138 residues: ATP synthase epsilon chain (138 aa).

Belongs to the ATPase epsilon chain family. As to quaternary structure, F-type ATPases have 2 components, CF(1) - the catalytic core - and CF(0) - the membrane proton channel. CF(1) has five subunits: alpha(3), beta(3), gamma(1), delta(1), epsilon(1). CF(0) has three main subunits: a, b and c.

The protein resides in the cell membrane. In terms of biological role, produces ATP from ADP in the presence of a proton gradient across the membrane. This is ATP synthase epsilon chain (atpC) from Streptococcus mutans serotype c (strain ATCC 700610 / UA159).